Here is a 161-residue protein sequence, read N- to C-terminus: Large ribosomal subunit protein uL30m (161 aa).

The transit peptide at 1-34 (MAGILRSIVQRPPGRLQTATKGVEPLVCVDWIRH) directs the protein to the mitochondrion.

This sequence belongs to the universal ribosomal protein uL30 family. Component of the mitochondrial ribosome large subunit (39S) which comprises a 16S rRNA and about 50 distinct proteins.

Its subcellular location is the mitochondrion. In Bos taurus (Bovine), this protein is Large ribosomal subunit protein uL30m (MRPL30).